The following is a 347-amino-acid chain: Cell division protein FtsQ (347 aa).

Residues 1-55 form a disordered region; the sequence is MARNGNPQFPDERSTATRAKATEPEELDDRFSDLEPEEDSPFLRSQKRVPVRRGP. Residues 1-66 lie on the Cytoplasmic side of the membrane; it reads MARNGNPQFP…PSKKAANRVK (66 aa). A compositionally biased stretch (basic and acidic residues) spans 10–33; sequence PDERSTATRAKATEPEELDDRFSD. The helical transmembrane segment at 67–87 threads the bilayer; it reads IALIVLGVLVVIGGVWMALSA. The Periplasmic portion of the chain corresponds to 88–347; it reads YGEHSWRFRL…PTAHTSGRRH (260 aa). One can recognise a POTRA domain in the interval 98–166; that stretch reads ESSDSIEVGG…DRIRVQVTER (69 aa). A disordered region spans residues 308–347; it reads DSHPSAAKPTAPAVAPAVEKPAVAKPAVAKPTAHTSGRRH. Residues 313 to 340 are compositionally biased toward low complexity; that stretch reads AAKPTAPAVAPAVEKPAVAKPAVAKPTA.

This sequence belongs to the FtsQ/DivIB family. FtsQ subfamily.

It is found in the cell inner membrane. In terms of biological role, essential cell division protein. The protein is Cell division protein FtsQ of Koribacter versatilis (strain Ellin345).